Here is a 355-residue protein sequence, read N- to C-terminus: Blue-sensitive opsin P467 (355 aa).

Residues 1–36 lie on the Extracellular side of the membrane; it reads MNGTEGINFYVPLSNKTGLVRSPFEYPQYYLADPWK. Residues Asn2 and Asn15 are each glycosylated (N-linked (GlcNAc...) asparagine). A helical transmembrane segment spans residues 37 to 61; the sequence is FKVLSFYMFFLIAAGMPLNGLTLFV. At 62-73 the chain is on the cytoplasmic side; that stretch reads TFQHKKLRQPLN. A helical membrane pass occupies residues 74-98; that stretch reads YILVNLAAANLVTVCCGFTVTFYAS. The Extracellular portion of the chain corresponds to 99 to 113; the sequence is WYAYFVFGPIGCAIE. Residues Cys110 and Cys187 are joined by a disulfide bond. A helical transmembrane segment spans residues 114–133; it reads GFFATIGGQVALWSLVVLAI. Residues 134-152 are Cytoplasmic-facing; sequence ERYIVICKPMGNFRFSATH. Residues 153–176 traverse the membrane as a helical segment; the sequence is AIMGIAFTWFMALACAGPPLFGWS. Over 177–202 the chain is Extracellular; that stretch reads RFIPEGMQCSCGPDYYTLNPDFHNES. Asn200 is a glycosylation site (N-linked (GlcNAc...) asparagine). The chain crosses the membrane as a helical span at residues 203-230; it reads YVIYMFIVHFTVPMVVIFFSYGRLVCKV. Over 231 to 252 the chain is Cytoplasmic; it reads REAAAQQQESATTQKAEKEVTR. Residues 253–276 traverse the membrane as a helical segment; the sequence is MVILMVLGFLLAWTPYAATAIWIF. The Extracellular portion of the chain corresponds to 277 to 284; that stretch reads TNRGAAFS. Residues 285-309 traverse the membrane as a helical segment; sequence VTFMTIPAFFSKSSSIYNPIIYVLL. Lys296 carries the N6-(retinylidene)lysine modification. The Cytoplasmic portion of the chain corresponds to 310–355; that stretch reads NKQFRNCMVTTICCGKNPFGDEDVSSSVSQSKTEVSSVSSSQVAPA. A disordered region spans residues 333-355; sequence VSSSVSQSKTEVSSVSSSQVAPA. Residues 334–355 are compositionally biased toward low complexity; sequence SSSVSQSKTEVSSVSSSQVAPA.

The protein belongs to the G-protein coupled receptor 1 family. Opsin subfamily. Post-translationally, phosphorylated on some or all of the serine and threonine residues present in the C-terminal region. In terms of tissue distribution, in this lizard the color pigments are found in the rod-shaped photoreceptor cells which have been derived from ancestral cone-like photoreceptors.

The protein resides in the membrane. Its function is as follows. Visual pigments are the light-absorbing molecules that mediate vision. They consist of an apoprotein, opsin, covalently linked to cis-retinal. The sequence is that of Blue-sensitive opsin P467 from Gekko gecko (Tokay gecko).